The chain runs to 332 residues: Gibberellin 2-beta-dioxygenase (332 aa).

One can recognise a Fe2OG dioxygenase domain in the interval 175–280; that stretch reads KSDSCFRLNH…RLSMIYFGGP (106 aa). Positions 204, 206, and 261 each coordinate Fe cation. Residue Arg271 is part of the active site.

It belongs to the iron/ascorbate-dependent oxidoreductase family. GA2OX subfamily. Fe cation is required as a cofactor.

The enzyme catalyses gibberellin A1 + 2-oxoglutarate + O2 = gibberellin A8 + succinate + CO2. It participates in plant hormone biosynthesis; gibberellin biosynthesis. Its function is as follows. Catalyzes the 2-beta-hydroxylation of several biologically active gibberellins, leading to the homeostatic regulation of their endogenous level. Catabolism of gibberellins (GAs) plays a central role in plant development. Converts GA9/GA20 to GA51/GA29 and GA4/GA1 to GA34/GA8. The sequence is that of Gibberellin 2-beta-dioxygenase (GA2OX1) from Phaseolus coccineus (Scarlet runner bean).